We begin with the raw amino-acid sequence, 858 residues long: Potassium channel KOR1 (858 aa).

A disordered region spans residues 1 to 41 (MGRGIGSKRRVEDDDGENMPGRKKKEEEEEEEDDDGEEEYE). Over 1 to 102 (MGRGIGSKRR…PDNKWYRLWT (102 aa)) the chain is Cytoplasmic. Residues 27 to 41 (EEEEEEDDDGEEEYE) are compositionally biased toward acidic residues. The helical transmembrane segment at 103–123 (RFILVWAVYSSFFTPLEFGFF) threads the bilayer. Residues 124–130 (RGLPRNL) lie on the Extracellular side of the membrane. A helical transmembrane segment spans residues 131 to 151 (FFLDIAGQIAFLIDIVLRFFV). Topologically, residues 152–174 (AYRDPDTYRMVHNPTSIALRYCK) are cytoplasmic. Residues 175-195 (SSFIFDLLGCFPWDAIYKACG) form a helical membrane-spanning segment. Topologically, residues 196-201 (SKEEVR) are extracellular. A helical; Voltage-sensor membrane pass occupies residues 202–222 (YLLWIRLTRAMKVTEFFRSME). Residues 223–236 (KDIRINYLFTRIVK) lie on the Cytoplasmic side of the membrane. Residues 237–257 (LIVVELYCTHTAACIFYYLAT) form a helical membrane-spanning segment. At 258 to 292 (TLPESMEGYTWIGSLQLGDYSYSHFREIDLTKRYM) the chain is on the extracellular side. The segment at residues 293-312 (TSLYFAIVTMATVGYGDIHA) is an intramembrane region (pore-forming). Over 313 to 316 (VNVR) the chain is Extracellular. The helical transmembrane segment at 317-337 (EMIFIMIYVSFDMILGAYLIG) threads the bilayer. Topologically, residues 338–858 (NMTALIVKGS…GDDGGTEARQ (521 aa)) are cytoplasmic. 419-539 (LFKGCSAEFI…RRILSNLSES (121 aa)) is a binding site for a nucleoside 3',5'-cyclic phosphate. 6 ANK repeats span residues 559–592 (KQEA…DPKN), 596–625 (DGRS…DIDL), 629–658 (FGNT…KLSL), 660–689 (NAGS…DPNA), 693–722 (DHRA…SVFA), and 726–756 (WGTT…ELSR). The KHA domain occupies 772–858 (RCSVFPHHPW…GDDGGTEARQ (87 aa)).

This sequence belongs to the potassium channel family. Plant (TC 1.A.1.4) subfamily.

It localises to the membrane. Its function is as follows. Probable outward-rectifying potassium channel. The chain is Potassium channel KOR1 from Oryza sativa subsp. japonica (Rice).